The sequence spans 149 residues: Small ribosomal subunit protein bS18c (149 aa).

Positions 1 to 23 (MDKITGPFRKSKKSFRKPLPPIQ) are disordered.

The protein belongs to the bacterial ribosomal protein bS18 family. Part of the 30S ribosomal subunit.

Its subcellular location is the plastid. The chain is Small ribosomal subunit protein bS18c from Cuscuta obtusiflora (Peruvian dodder).